Consider the following 215-residue polypeptide: Cytochrome b6 (215 aa).

Residues 32-52 (IFYCLGGITLTCFLVQVATGF) traverse the membrane as a helical segment. Residue Cys35 participates in heme c binding. Residues His86 and His100 each coordinate heme b. A run of 3 helical transmembrane segments spans residues 90-110 (ASMMVLMMILHVFRVYLTGGF), 116-136 (LTWVTGVVLAVLTASFGVTGY), and 186-206 (LHTFVLPLLTAVFMLMHFPMI). Residues His187 and His202 each coordinate heme b.

It belongs to the cytochrome b family. PetB subfamily. As to quaternary structure, the 4 large subunits of the cytochrome b6-f complex are cytochrome b6, subunit IV (17 kDa polypeptide, PetD), cytochrome f and the Rieske protein, while the 4 small subunits are PetG, PetL, PetM and PetN. The complex functions as a dimer. Requires heme b as cofactor. The cofactor is heme c.

The protein localises to the plastid. The protein resides in the chloroplast thylakoid membrane. In terms of biological role, component of the cytochrome b6-f complex, which mediates electron transfer between photosystem II (PSII) and photosystem I (PSI), cyclic electron flow around PSI, and state transitions. This Phalaenopsis aphrodite subsp. formosana (Moth orchid) protein is Cytochrome b6.